Consider the following 209-residue polypeptide: Response regulator protein VraR (209 aa).

Residues 4–120 enclose the Response regulatory domain; that stretch reads KVLFVDDHEM…DIADAVRKTS (117 aa). Asp55 bears the 4-aspartylphosphate mark. The region spanning 141–206 is the HTH luxR-type domain; the sequence is RAELYEMLTE…QAVIYAFQHN (66 aa). The segment at residues 165-184 is a DNA-binding region (H-T-H motif); the sequence is NQEIASASHITIKTVKTHVS.

As to quaternary structure, homodimer. Phosphorylated by VraS. Phosphorylation state of VraR controls dimerization of the protein.

Its function is as follows. Member of the two-component regulatory system VraS/VraR involved in the control of the cell wall peptidoglycan biosynthesis. Upon cellular stress, the histidine kinase VraS transfers the phosphoryl group onto VraR. Upon phosphorylation, VraR dimerizes at the N-terminal domain. In turn, phosphorylation-induced dimerization expand and enhance the VraR binding to its own promoter leading to increased expression and subsequent modulation of as many as 40 genes, which ultimately constitute the S.aureus response to cell wall damage. In addition, inhibits the host autophagic flux and delays the early stage of autophagosome formation, thereby promoting bacterial survival. Facilitates the ability of S.aureus to resist host polymorphonuclear leukocytes-mediated phagocytosis and killing thus contributing to immune evasion. The protein is Response regulator protein VraR (vraR) of Staphylococcus aureus (strain NCTC 8325 / PS 47).